Reading from the N-terminus, the 300-residue chain is 3-dehydrocarnitine:acetyl-CoA trimethylamine transferase (300 aa).

Positions 51, 53, and 254 each coordinate Zn(2+).

It belongs to the BKACE family. Homotetramer. Requires Zn(2+) as cofactor.

The catalysed reaction is 3-dehydrocarnitine + acetyl-CoA = N,N,N-trimethylglycyl-CoA + acetoacetate. The protein operates within amine and polyamine metabolism; carnitine metabolism. Functionally, catalyzes the condensation of dehydrocarnitine and acetyl-CoA, forming acetoacetate and betainyl-CoA (N,N,N-trimethylglycyl-CoA). Is involved in a L-carnitine degradation pathway that allows R.meliloti to grow on L-carnitine as the sole source of carbon and nitrogen. The sequence is that of 3-dehydrocarnitine:acetyl-CoA trimethylamine transferase from Rhizobium meliloti (strain 1021) (Ensifer meliloti).